Reading from the N-terminus, the 556-residue chain is Genetic interactor of prohibitins 3, mitochondrial (556 aa).

The transit peptide at 1–21 (MLNLCHALRGVRQFSCSVIVK) directs the protein to the mitochondrion. A CP-type G domain is found at 113–305 (ESTLNDILNY…LFDLPGYSTS (193 aa)).

It belongs to the TRAFAC class YlqF/YawG GTPase family. GEP3 subfamily.

It is found in the mitochondrion. Its function is as follows. Interacts genetically with prohibitins and thus may be involved in the mitochondrial lipid metabolism. This chain is Genetic interactor of prohibitins 3, mitochondrial (GEP3), found in Saccharomyces cerevisiae (strain JAY291) (Baker's yeast).